We begin with the raw amino-acid sequence, 149 residues long: Large ribosomal subunit protein bL9 (149 aa).

It belongs to the bacterial ribosomal protein bL9 family.

In terms of biological role, binds to the 23S rRNA. This Proteus mirabilis (strain HI4320) protein is Large ribosomal subunit protein bL9.